The primary structure comprises 558 residues: ATP-dependent RNA helicase ROK1 (558 aa).

Residues 26–91 are disordered; that stretch reads PSAKQQQYEQ…EEAPPLEIQT (66 aa). 2 stretches are compositionally biased toward basic and acidic residues: residues 34 to 53 and 64 to 81; these read EQHK…DFFH and DSTD…KKED. A Q motif motif is present at residues 120–148; sequence DMIGRFRLDSKLLSNLLEAEFVEPTAIQC. One can recognise a Helicase ATP-binding domain in the interval 151–329; it reads LPISLSGRDL…HSIMRDPIRV (179 aa). 164–171 is an ATP binding site; it reads APTGSGKT. A DEAD box motif is present at residues 276–279; sequence DEAD. One can recognise a Helicase C-terminal domain in the interval 340-504; it reads TIDQKLVFTG…GFSGWMENMT (165 aa). Positions 509-558 are disordered; it reads NEKKKVKHKEIDRKDISTVPKLVKHKRKQREQMIEASKKRKQEETRNALQ. Over residues 538-558 the composition is skewed to basic and acidic residues; it reads REQMIEASKKRKQEETRNALQ.

This sequence belongs to the DEAD box helicase family. DDX52/ROK1 subfamily. In terms of assembly, interacts with the U3 snoRNA and is associated with the 90S and 40S pre-ribosomes.

It is found in the nucleus. It localises to the nucleolus. The enzyme catalyses ATP + H2O = ADP + phosphate + H(+). Functionally, ATP-dependent RNA helicase involved in 40S ribosomal subunit biogenesis. Required for the processing and cleavage of 35S pre-rRNA at sites A0, A1, and A2, leading to mature 18S rRNA. This is ATP-dependent RNA helicase ROK1 (ROK1) from Scheffersomyces stipitis (strain ATCC 58785 / CBS 6054 / NBRC 10063 / NRRL Y-11545) (Yeast).